The chain runs to 162 residues: Ribosome maturation factor RimP (162 aa).

It belongs to the RimP family.

It is found in the cytoplasm. In terms of biological role, required for maturation of 30S ribosomal subunits. This is Ribosome maturation factor RimP from Leptospira interrogans serogroup Icterohaemorrhagiae serovar copenhageni (strain Fiocruz L1-130).